A 477-amino-acid chain; its full sequence is Aryl-phospho-beta-D-glucosidase BglC (477 aa).

The active-site Proton donor is the glutamate 170. Glutamate 378 functions as the Nucleophile in the catalytic mechanism.

It belongs to the glycosyl hydrolase 1 family.

The enzyme catalyses 6-phospho-beta-D-glucosyl-(1-&gt;4)-D-glucose + H2O = D-glucose 6-phosphate + D-glucose. In terms of biological role, is able to catalyze the hydrolysis of aryl-phospho-beta-D-glucosides such as 4-methylumbelliferyl-phospho-beta-D-glucopyranoside (MUG-P), phosphoarbutin and phosphosalicin. Is not essential for growth on arbutin and salicin as the sole carbon source. The protein is Aryl-phospho-beta-D-glucosidase BglC (bglC) of Bacillus subtilis (strain 168).